The chain runs to 122 residues: Large ribosomal subunit protein uL14 (122 aa).

It belongs to the universal ribosomal protein uL14 family. In terms of assembly, part of the 50S ribosomal subunit. Forms a cluster with proteins L3 and L19. In the 70S ribosome, L14 and L19 interact and together make contacts with the 16S rRNA in bridges B5 and B8.

In terms of biological role, binds to 23S rRNA. Forms part of two intersubunit bridges in the 70S ribosome. The polypeptide is Large ribosomal subunit protein uL14 (Halorhodospira halophila (strain DSM 244 / SL1) (Ectothiorhodospira halophila (strain DSM 244 / SL1))).